Consider the following 435-residue polypeptide: ATP-dependent Clp protease ATP-binding subunit ClpX 3 (435 aa).

In terms of domain architecture, ClpX-type ZB spans 1 to 53 (MSSDPPAKTQHCSFCGIEQGRDTPLIAGIEGQICEACVRLAEQVVANWGRKRS). Residues Cys-12, Cys-15, Cys-34, and Cys-37 each contribute to the Zn(2+) site. Residue 125–132 (PTGTGKTL) coordinates ATP.

This sequence belongs to the ClpX chaperone family. As to quaternary structure, component of the ClpX-ClpP complex. Forms a hexameric ring that, in the presence of ATP, binds to fourteen ClpP subunits assembled into a disk-like structure with a central cavity, resembling the structure of eukaryotic proteasomes.

ATP-dependent specificity component of the Clp protease. It directs the protease to specific substrates. Can perform chaperone functions in the absence of ClpP. This is ATP-dependent Clp protease ATP-binding subunit ClpX 3 from Methylococcus capsulatus (strain ATCC 33009 / NCIMB 11132 / Bath).